The sequence spans 859 residues: Leucine--tRNA ligase (859 aa).

Residues 42–52 carry the 'HIGH' region motif; it reads PYPSGRLHMGH. Residues 618 to 622 carry the 'KMSKS' region motif; the sequence is KMSKS. Position 621 (K621) interacts with ATP.

This sequence belongs to the class-I aminoacyl-tRNA synthetase family.

It is found in the cytoplasm. It carries out the reaction tRNA(Leu) + L-leucine + ATP = L-leucyl-tRNA(Leu) + AMP + diphosphate. The protein is Leucine--tRNA ligase of Shewanella putrefaciens (strain CN-32 / ATCC BAA-453).